A 619-amino-acid chain; its full sequence is MPDPAAHLPFFYGSISRAEAEEHLKLAGMADGLFLLRQCLRSLGGYVLSLVHDVRFHHFPIERQLNGTYAIAGGKAHCGPAELCEFYSRDPDGLPCNLRKPCNRPSGLEPQPGVFDCLRDAMVRDYVRQTWKLEGEALEQAIISQAPQVEKLIATTAHERMPWYHSSLTREEAERKLYSGAQTDGKFLLRPRKEQGTYALSLIYGKTVYHYLISQDKAGKYCIPEGTKFDTLWQLVEYLKLKADGLIYCLKEACPNSSASNASGAAAPTLPAHPSTLTHPQRRIDTLNSDGYTPEPARITSPDKPRPMPMDTSVYESPYSDPEELKDKKLFLKRDNLLIADIELGCGNFGSVRQGVYRMRKKQIDVAIKVLKQGTEKADTEEMMREAQIMHQLDNPYIVRLIGVCQAEALMLVMEMAGGGPLHKFLVGKREEIPVSNVAELLHQVSMGMKYLEEKNFVHRDLAARNVLLVNRHYAKISDFGLSKALGADDSYYTARSAGKWPLKWYAPECINFRKFSSRSDVWSYGVTMWEALSYGQKPYKKMKGPEVMAFIEQGKRMECPPECPPELYALMSDCWIYKWEDRPDFLTVEQRMRACYYSLASKVEGPPGSTQKAEAACA.

The SH2 1 domain maps to phenylalanine 10–cysteine 102. An interdomain A region spans residues asparagine 103–proline 162. The SH2 2 domain maps to tryptophan 163–cysteine 254. A Phosphotyrosine modification is found at tyrosine 248. Positions proline 255–leucine 337 are interdomain B. Residues serine 260–proline 309 are disordered. Residue serine 289 is modified to Phosphoserine. Residue tyrosine 292 is modified to Phosphotyrosine. Tyrosine 315 is subject to Phosphotyrosine; by LCK. Tyrosine 319 is modified (phosphotyrosine). Residues leucine 338–leucine 600 form the Protein kinase domain. Residues glycine 345 to valine 352 and lysine 369 contribute to the ATP site. The active-site Proton acceptor is the aspartate 461. A phosphotyrosine mark is found at tyrosine 492 and tyrosine 493. A Glycyl lysine isopeptide (Lys-Gly) (interchain with G-Cter in ubiquitin) cross-link involves residue lysine 544. Lysine 603 is subject to N6-acetyllysine.

Belongs to the protein kinase superfamily. Tyr protein kinase family. SYK/ZAP-70 subfamily. As to quaternary structure, interacts with CD247/CD3Z; this interaction docks ZAP70 at the stimulated TCR. Interacts with NFAM1. Interacts with adapter protein SLA; this interaction negatively regulates T-cell receptor signaling. Interacts with FCRL3. Interacts with VAV1. Interacts with CBL; this interaction promotes ubiquitination, internalization and subsequent degradation of CD247/CD3Z. Identified in a complex with CBL and UBE2L3. Interacts with SHB. Interacts with adapter protein SLA2; this interaction negatively regulates T-cell receptor signaling. Interacts with CBLB. Interacts (via SH2 domains) with RHOH; this interaction regulates ZAP70 subcellular localization. Interacts with DEF6. Interacts (ubiquitinated form) with OTUD7B and UBASH3B. Post-translationally, phosphorylated on tyrosine residues upon T-cell antigen receptor (TCR) stimulation. Phosphorylation of Tyr-315 and Tyr-319 are essential for ZAP70 positive function on T-lymphocyte activation whereas Tyr-292 has a negative regulatory role. Within the C-terminal kinase domain, Tyr-492 and Tyr-493 are phosphorylated after TCR induction, Tyr-492 playing a negative regulatory role and Tyr-493 a positive. Tyr-493 is dephosphorylated by PTN22. Ubiquitinated in response to T cell activation. Deubiquitinated by OTUD7B. Expressed in T- and natural killer cells. Also present in early thymocytes and pro/pre B-cells.

It is found in the cytoplasm. The protein localises to the cell membrane. The enzyme catalyses L-tyrosyl-[protein] + ATP = O-phospho-L-tyrosyl-[protein] + ADP + H(+). With respect to regulation, activated by phosphorylation at Tyr-493 in the activation loop. Inhibited by staurosporine. In terms of biological role, tyrosine kinase that plays an essential role in regulation of the adaptive immune response. Regulates motility, adhesion and cytokine expression of mature T-cells, as well as thymocyte development. Also contributes to the development and activation of primary B-lymphocytes. When antigen presenting cells (APC) activate T-cell receptor (TCR), a serie of phosphorylations lead to the recruitment of ZAP70 to the doubly phosphorylated TCR component CD247/CD3Z through ITAM motif at the plasma membrane. This recruitment serves to localization to the stimulated TCR and to relieve its autoinhibited conformation. Release of ZAP70 active conformation is further stabilized by phosphorylation mediated by LCK. Subsequently, ZAP70 phosphorylates at least 2 essential adapter proteins: LAT and LCP2. In turn, a large number of signaling molecules are recruited and ultimately lead to lymphokine production, T-cell proliferation and differentiation. Furthermore, ZAP70 controls cytoskeleton modifications, adhesion and mobility of T-lymphocytes, thus ensuring correct delivery of effectors to the APC. ZAP70 is also required for TCR-CD247/CD3Z internalization and degradation through interaction with the E3 ubiquitin-protein ligase CBL and adapter proteins SLA and SLA2. Thus, ZAP70 regulates both T-cell activation switch on and switch off by modulating TCR expression at the T-cell surface. During thymocyte development, ZAP70 promotes survival and cell-cycle progression of developing thymocytes before positive selection (when cells are still CD4/CD8 double negative). Additionally, ZAP70-dependent signaling pathway may also contribute to primary B-cells formation and activation through B-cell receptor (BCR). This chain is Tyrosine-protein kinase ZAP-70 (ZAP70), found in Homo sapiens (Human).